The primary structure comprises 772 residues: Acetamidase regulatory protein (772 aa).

Residues 1–16 (MSSTAQKNSLSPTGNG) are compositionally biased toward polar residues. Residues 1-23 (MSSTAQKNSLSPTGNGVTKRKSG) form a disordered region. The zn(2)-C6 fungal-type DNA-binding region spans 26–59 (ACVHCHRRKVRCDARIVGLPCSNCRSSGKTDCRI). Disordered regions lie at residues 78–99 (RCRP…TISE), 114–148 (AAAP…QECH), and 627–690 (ATSE…QTAV). Positions 114-123 (AAAPPASVAP) are enriched in low complexity. Composition is skewed to polar residues over residues 124 to 144 (NVQS…SPQA) and 634 to 658 (PFSS…QHSS). Positions 671-686 (LLPSYDSPTPDSTSLP) are enriched in low complexity.

The protein localises to the nucleus. Positively regulates the expression of genes involved in the catabolism of certain amides, omega amino acids, and lactams. In Aspergillus fumigatus (strain ATCC MYA-4609 / CBS 101355 / FGSC A1100 / Af293) (Neosartorya fumigata), this protein is Acetamidase regulatory protein (amdR).